The following is a 359-amino-acid chain: MSFTVHLNKILQKYQDLEADLNGGKLDNKELALISKEYSNLKPIIEKLNRYLKAHENIKYLQQVIDTEQDLELKSIAEVELYDTLNYLPKLEEEVKISLLPKESDDHKNAIIEVRAGTGGDEAALFAASLFQMYNRYAERKKWKFELLSISDTEIGGYKEASALISGNGVFANLKFESGVHRVQRIPKTESNGRIHTSAATVVVLPEAEEVDVKIDAKDLKIDTYRASGAGGQHVNTTDSAVRITHIPTGVVVSQQDEKSQHKNKAKAMKILYARLYDLEKQKSQQEQAMSRKVQVGTGDRSERIRTYNYPQGRVTDHRINLTLYKIEEIIQEGKLDEIINNLISENEAKKIADSNIQF.

Position 233 is an N5-methylglutamine (Gln233).

It belongs to the prokaryotic/mitochondrial release factor family. In terms of processing, methylated by PrmC. Methylation increases the termination efficiency of RF1.

The protein localises to the cytoplasm. Its function is as follows. Peptide chain release factor 1 directs the termination of translation in response to the peptide chain termination codons UAG and UAA. The protein is Peptide chain release factor 1 of Orientia tsutsugamushi (strain Ikeda) (Rickettsia tsutsugamushi).